The following is a 558-amino-acid chain: Ubiquitin carboxyl-terminal hydrolase 30 homolog (558 aa).

Residues 6 to 26 (ILMAAGVTVAAVVGAFVFWGP) form a helical membrane-spanning segment. Residues 39–550 (AGLHNFGLTC…PAYLLFYDRG (512 aa)) enclose the USP domain. Catalysis depends on Cys-48, which acts as the Nucleophile. The disordered stretch occupies residues 267-300 (LATPMLGGERSSRPRLPQSQQQQDEGLNRRVSSS). Positions 280 to 289 (PRLPQSQQQQ) are enriched in low complexity. Residue His-506 is the Proton acceptor of the active site.

Belongs to the peptidase C19 family.

It localises to the mitochondrion outer membrane. The enzyme catalyses Thiol-dependent hydrolysis of ester, thioester, amide, peptide and isopeptide bonds formed by the C-terminal Gly of ubiquitin (a 76-residue protein attached to proteins as an intracellular targeting signal).. Deubiquitinating enzyme that acts as a key inhibitor of mitophagy by counteracting the action of parkin (park). This is Ubiquitin carboxyl-terminal hydrolase 30 homolog from Drosophila melanogaster (Fruit fly).